A 381-amino-acid chain; its full sequence is Anhydro-N-acetylmuramic acid kinase (381 aa).

22-29 is an ATP binding site; the sequence is GTSIDGID.

This sequence belongs to the anhydro-N-acetylmuramic acid kinase family.

The catalysed reaction is 1,6-anhydro-N-acetyl-beta-muramate + ATP + H2O = N-acetyl-D-muramate 6-phosphate + ADP + H(+). It functions in the pathway amino-sugar metabolism; 1,6-anhydro-N-acetylmuramate degradation. Its pathway is cell wall biogenesis; peptidoglycan recycling. Its function is as follows. Catalyzes the specific phosphorylation of 1,6-anhydro-N-acetylmuramic acid (anhMurNAc) with the simultaneous cleavage of the 1,6-anhydro ring, generating MurNAc-6-P. Is required for the utilization of anhMurNAc either imported from the medium or derived from its own cell wall murein, and thus plays a role in cell wall recycling. This is Anhydro-N-acetylmuramic acid kinase from Xylella fastidiosa (strain Temecula1 / ATCC 700964).